The primary structure comprises 110 residues: Large ribosomal subunit protein uL22 (110 aa).

Belongs to the universal ribosomal protein uL22 family. In terms of assembly, part of the 50S ribosomal subunit.

In terms of biological role, this protein binds specifically to 23S rRNA; its binding is stimulated by other ribosomal proteins, e.g. L4, L17, and L20. It is important during the early stages of 50S assembly. It makes multiple contacts with different domains of the 23S rRNA in the assembled 50S subunit and ribosome. The globular domain of the protein is located near the polypeptide exit tunnel on the outside of the subunit, while an extended beta-hairpin is found that lines the wall of the exit tunnel in the center of the 70S ribosome. The chain is Large ribosomal subunit protein uL22 from Syntrophobacter fumaroxidans (strain DSM 10017 / MPOB).